Consider the following 288-residue polypeptide: MKKLSFQQIILTLQNYWQDYGCAILQPYDAHVGAGTFHPATVLRCLGTKPWSVAYVQPSRRPGDSRYGMHPNRMQHYYQFQVILKPSPDNIQDLYLKSLECLGLDLKTHDIRFVEDDWESPTLGAAGLGWEVWCNGMEVSQFTYMQQIGGIECRPVAGEITYGLERLALYIQGVDEVKELDWNGQVGEKALKYGKVDFEAERQFSKYNLELADSEMLVRHFKDSEEQCEWLVKKNVPFAAYDECLKASHAFNQLNALGVISVTERASYVLRVRHLAKICCTKWLEMNE.

The protein belongs to the class-II aminoacyl-tRNA synthetase family. Tetramer of two alpha and two beta subunits.

The protein resides in the cytoplasm. It carries out the reaction tRNA(Gly) + glycine + ATP = glycyl-tRNA(Gly) + AMP + diphosphate. The sequence is that of Glycine--tRNA ligase alpha subunit from Rickettsia canadensis (strain McKiel).